A 1043-amino-acid chain; its full sequence is Sarcoplasmic/endoplasmic reticulum calcium ATPase 2 (1043 aa).

Residues 1–48 (MENAHTKTVEEVLGHFGVNESTGLSLEQVKKLKERWGSNELPAEEGKT) lie on the Cytoplasmic side of the membrane. The residue at position 38 (Ser38) is a Phosphoserine. A helical transmembrane segment spans residues 49 to 69 (LLELVIEQFEDLLVRILLLAA). The Lumenal segment spans residues 70–89 (CISFVLAWFEEGEETITAFV). The helical transmembrane segment at 90 to 110 (EPFVILLILVANAIVGVWQER) threads the bilayer. The Cytoplasmic portion of the chain corresponds to 111–253 (NAENAIEALK…QERTPLQQKL (143 aa)). A helical transmembrane segment spans residues 254 to 273 (DEFGEQLSKVISLICIAVWI). Over 274-295 (INIGHFNDPVHGGSWIRGAIYY) the chain is Lumenal. 2 positions are modified to 3'-nitrotyrosine: Tyr294 and Tyr295. A helical transmembrane segment spans residues 296 to 313 (FKIAVALAVAAIPEGLPA). Ca(2+) is bound by residues Val304, Ala305, Ile307, and Glu309. At 314–756 (VITTCLALGT…EEGRAIYNNM (443 aa)) the chain is on the cytoplasmic side. Asp351 functions as the 4-aspartylphosphate intermediate in the catalytic mechanism. Residues Asp351 and Thr353 each contribute to the Mg(2+) site. Thr353 contributes to the ATP binding site. At Thr441 the chain carries Phosphothreonine. Residues Glu442, Arg489, and Lys514 each coordinate ATP. At Ser531 the chain carries Phosphoserine. ATP is bound at residue Arg559. The interval 575-594 (MHLEDSANFIKYETNLTFVG) is interaction with HAX1. Ser580 is subject to Phosphoserine. Thr624, Gly625, and Asp626 together coordinate ATP. A phosphoserine mark is found at Ser661 and Ser663. Residues Arg677 and Lys683 each coordinate ATP. Mg(2+) is bound at residue Asp702. Asn705 lines the ATP pocket. A helical membrane pass occupies residues 757-776 (KQFIRYLISSNVGEVVCIFL). Asn767 and Glu770 together coordinate Ca(2+). Topologically, residues 777 to 786 (TAALGFPEAL) are lumenal. A helical membrane pass occupies residues 787–807 (IPVQLLWVNLVTDGLPATALG). An interaction with PLN region spans residues 787-807 (IPVQLLWVNLVTDGLPATALG). An interaction with TMEM64 and PDIA3 region spans residues 788 to 1043 (PVQLLWVNLV…DTNFSDMFWS (256 aa)). Ca(2+)-binding residues include Asn795, Thr798, and Asp799. Residues 808–827 (FNPPDLDIMNKPPRNPKEPL) are Cytoplasmic-facing. Residues 828 to 850 (ISGWLFFRYLAIGCYVGAATVGA) traverse the membrane as a helical segment. Topologically, residues 851–896 (AAWWFIAADGGPRVSFYQLSHFLQCKEDNPDFEGVDCAIFESPYPM) are lumenal. Cys875 and Cys887 are disulfide-bonded. Residues 897-916 (TMALSVLVTIEMCNALNSLS) form a helical membrane-spanning segment. Position 907 (Glu907) interacts with Ca(2+). Residues 917 to 929 (ENQSLLRMPPWEN) are Cytoplasmic-facing. The helical transmembrane segment at 930 to 948 (IWLVGSICLSMSLHFLILY) threads the bilayer. The interaction with PLN stretch occupies residues 931–942 (WLVGSICLSMSL). Residues 949–963 (VEPLPLIFQITPLNL) are Lumenal-facing. The helical transmembrane segment at 964–984 (TQWLMVLKISLPVILMDETLK) threads the bilayer. Topologically, residues 985-1043 (FVARNYLEPGKECAQPATKPSCSLSACTDGISWPFVLLIMPLVVWVYSTDTNFSDMFWS) are cytoplasmic.

The protein belongs to the cation transport ATPase (P-type) (TC 3.A.3) family. Type IIA subfamily. As to quaternary structure, interacts with sarcolipin (SLN); the interaction inhibits ATP2A2 Ca(2+) affinity. Interacts with phospholamban (PLN); the interaction inhibits ATP2A2 Ca(2+) affinity. Interacts with myoregulin (MRLN). Interacts with ARLN and ERLN; the interactions inhibit ATP2A2 Ca(2+) affinity. Interacts with STRIT1/DWORF; the interaction results in activation of ATP2A2. Interacts with the monomeric forms of SLN, PLN, ARLN, ERLN and STRI1/DWORF. Interacts with HAX1. Interacts with S100A8 and S100A9. Interacts with SLC35G1 and STIM1. Interacts with TMEM203. Interacts with TMEM64 and PDIA3. Interacts with TMX1. Interacts with TMX2. Interacts with VMP1; VMP1 competes with PLN and SLN to prevent them from forming an inhibitory complex with ATP2A2. Interacts with ULK1. Interacts with S100A1 in a Ca(2+)-dependent manner. Interacts with TUNAR. Interacts with FLVCR2; this interaction occurs in the absence of heme and promotes ATP2A2 proteasomal degradation; this complex is dissociated upon heme binding. Interacts with FNIP1. Interacts with TRAM2 (via C-terminus). Mg(2+) is required as a cofactor. In terms of processing, nitrated under oxidative stress. Nitration on the two tyrosine residues inhibits catalytic activity. Serotonylated on Gln residues by TGM2 in response to hypoxia, leading to its inactivation. Isoform 2 is highly expressed in heart and slow twitch skeletal muscle. Isoform 1 is widely expressed.

The protein localises to the endoplasmic reticulum membrane. It localises to the sarcoplasmic reticulum membrane. The catalysed reaction is Ca(2+)(in) + ATP + H2O = Ca(2+)(out) + ADP + phosphate + H(+). Its activity is regulated as follows. Has different conformational states with differential Ca2+ affinity. The E1 conformational state (active form) shows high Ca(2+) affinity, while the E2 state exhibits low Ca(2+) affinity. Binding of ATP allosterically increases its affinity for subsequent binding of Ca2+. Reversibly inhibited by phospholamban (PLN) at low calcium concentrations. PLN inhibits ATP2A2 Ca(2+) affinity by disrupting its allosteric activation by ATP. Inhibited by sarcolipin (SLN) and myoregulin (MRLN). The inhibition is blocked by VMP1. Enhanced by STRIT1/DWORF; STRIT1 increases activity by displacing sarcolipin (SLN), phospholamban (PLN) and myoregulin (MRLN). Stabilizes SERCA2 in its E2 state. Its function is as follows. This magnesium-dependent enzyme catalyzes the hydrolysis of ATP coupled with the translocation of calcium from the cytosol to the sarcoplasmic reticulum lumen. Involved in autophagy in response to starvation. Upon interaction with VMP1 and activation, controls ER-isolation membrane contacts for autophagosome formation. Also modulates ER contacts with lipid droplets, mitochondria and endosomes. In coordination with FLVCR2 mediates heme-stimulated switching from mitochondrial ATP synthesis to thermogenesis. Involved in the regulation of the contraction/relaxation cycle. Acts as a regulator of TNFSF11-mediated Ca(2+) signaling pathways via its interaction with TMEM64 which is critical for the TNFSF11-induced CREB1 activation and mitochondrial ROS generation necessary for proper osteoclast generation. Association between TMEM64 and SERCA2 in the ER leads to cytosolic Ca(2+) spiking for activation of NFATC1 and production of mitochondrial ROS, thereby triggering Ca(2+) signaling cascades that promote osteoclast differentiation and activation. This is Sarcoplasmic/endoplasmic reticulum calcium ATPase 2 (Atp2a2) from Rattus norvegicus (Rat).